The chain runs to 231 residues: Uracil phosphoribosyltransferase (231 aa).

38-42 (KGLVR) lines the GTP pocket. Residues arginine 87, arginine 112, and 140-148 (DPMIATGST) contribute to the 5-phospho-alpha-D-ribose 1-diphosphate site. Uracil contacts are provided by residues isoleucine 203 and 208–210 (GDA). Aspartate 209 lines the 5-phospho-alpha-D-ribose 1-diphosphate pocket.

This sequence belongs to the UPRTase family. Requires Mg(2+) as cofactor.

The catalysed reaction is UMP + diphosphate = 5-phospho-alpha-D-ribose 1-diphosphate + uracil. It participates in pyrimidine metabolism; UMP biosynthesis via salvage pathway; UMP from uracil: step 1/1. Allosterically activated by GTP. Catalyzes the conversion of uracil and 5-phospho-alpha-D-ribose 1-diphosphate (PRPP) to UMP and diphosphate. The sequence is that of Uracil phosphoribosyltransferase from Methanococcus maripaludis (strain C5 / ATCC BAA-1333).